The sequence spans 274 residues: uncharacterized protein (274 aa).

Belongs to the class IV-like SAM-binding methyltransferase superfamily. RNA methyltransferase TrmH family.

This is an uncharacterized protein from Synechocystis sp. (strain ATCC 27184 / PCC 6803 / Kazusa).